The chain runs to 519 residues: Galactan beta-1,4-galactosyltransferase GALS2 (519 aa).

The chain crosses the membrane as a helical span at residues 28–48 (LALMALLVLCTLATLLPFLPS). A GT92 domain is found at 257 to 471 (DYLYCGSSLY…YHGSISQRRE (215 aa)).

It belongs to the glycosyltransferase 92 family. In terms of tissue distribution, expressed in the midrib of mature leaves, root vasculature, flower filaments, siliques and seeds.

Its subcellular location is the golgi apparatus membrane. Functionally, involved in the biosynthesis of beta-1,4-galactan. Beta-1,4-galactans are abundant polysaccharides in plant cell walls and are found as side-chain of rhamnogalacturonan I, which is a major component of pectin. In Arabidopsis thaliana (Mouse-ear cress), this protein is Galactan beta-1,4-galactosyltransferase GALS2.